The sequence spans 69 residues: Putative membrane protein insertion efficiency factor (69 aa).

This sequence belongs to the UPF0161 family.

Its subcellular location is the cell inner membrane. In terms of biological role, could be involved in insertion of integral membrane proteins into the membrane. The sequence is that of Putative membrane protein insertion efficiency factor from Nitrosomonas europaea (strain ATCC 19718 / CIP 103999 / KCTC 2705 / NBRC 14298).